Here is a 100-residue protein sequence, read N- to C-terminus: Urease subunit gamma (100 aa).

The protein belongs to the urease gamma subunit family. Heterotrimer of UreA (gamma), UreB (beta) and UreC (alpha) subunits. Three heterotrimers associate to form the active enzyme.

It localises to the cytoplasm. The catalysed reaction is urea + 2 H2O + H(+) = hydrogencarbonate + 2 NH4(+). It functions in the pathway nitrogen metabolism; urea degradation; CO(2) and NH(3) from urea (urease route): step 1/1. The protein is Urease subunit gamma of Paraburkholderia phymatum (strain DSM 17167 / CIP 108236 / LMG 21445 / STM815) (Burkholderia phymatum).